Here is a 681-residue protein sequence, read N- to C-terminus: Hydroxyproline O-galactosyltransferase GALT6 (681 aa).

Topologically, residues methionine 1–glutamine 28 are cytoplasmic. A helical; Signal-anchor for type II membrane protein membrane pass occupies residues isoleucine 29–phenylalanine 49. Over lysine 50–arginine 681 the chain is Lumenal. The disordered stretch occupies residues serine 57–threonine 80. Residues threonine 62–alanine 78 are compositionally biased toward basic and acidic residues. One can recognise a Galectin domain in the interval asparagine 187–glycine 401. A glycan (N-linked (GlcNAc...) asparagine) is linked at asparagine 629.

This sequence belongs to the glycosyltransferase 31 family. The cofactor is Mn(2+). As to expression, expressed in junveile leaves and stems, and at lower levels in cauline leaves and siliques.

The protein resides in the golgi apparatus membrane. Its pathway is protein modification; protein glycosylation. Possesses hydroxyproline O-galactosyltransferase activity. Transfers galactose from UDP-galactose to hydroxyproline residues in the arabinogalactan proteins (AGPs). Is specific for AGPs containing non-contiguous peptidyl hydroxyproline residues. Utilizes UDP-galactose solely as sugar donor. The addition of galactose onto the peptidyl hydroxyproline residues in AGP core proteins represents the first committed step in arabinogalactan polysaccharide addition. AGP glycans play essential roles in both vegetative and reproductive plant growth. This is Hydroxyproline O-galactosyltransferase GALT6 from Arabidopsis thaliana (Mouse-ear cress).